The following is a 428-amino-acid chain: 3-phosphoshikimate 1-carboxyvinyltransferase (428 aa).

3-phosphoshikimate-binding residues include Lys-23, Ser-24, and Arg-28. A phosphoenolpyruvate-binding site is contributed by Lys-23. Phosphoenolpyruvate is bound by residues Gly-97 and Arg-125. 7 residues coordinate 3-phosphoshikimate: Ser-170, Ser-171, Gln-172, Ser-198, Asp-314, Asn-337, and Lys-341. Gln-172 is a phosphoenolpyruvate binding site. The active-site Proton acceptor is the Asp-314. Phosphoenolpyruvate contacts are provided by Arg-345, Arg-387, and Lys-412.

It belongs to the EPSP synthase family. In terms of assembly, monomer.

It is found in the cytoplasm. It carries out the reaction 3-phosphoshikimate + phosphoenolpyruvate = 5-O-(1-carboxyvinyl)-3-phosphoshikimate + phosphate. Its pathway is metabolic intermediate biosynthesis; chorismate biosynthesis; chorismate from D-erythrose 4-phosphate and phosphoenolpyruvate: step 6/7. Catalyzes the transfer of the enolpyruvyl moiety of phosphoenolpyruvate (PEP) to the 5-hydroxyl of shikimate-3-phosphate (S3P) to produce enolpyruvyl shikimate-3-phosphate and inorganic phosphate. The polypeptide is 3-phosphoshikimate 1-carboxyvinyltransferase (Yersinia pseudotuberculosis serotype IB (strain PB1/+)).